A 996-amino-acid chain; its full sequence is MEIDLPFKVEYSKSSRASCKGCKNKIEAGILRIAAMVQSAFHDGKQPNWFHEQCFFQKQRPTSAGDIENFENIRFEDQERIKKAIDNCTTVISAGGSKKGAKRSKGENNAIKDFGIEYAKSGRASCRGCEQKILKDQIRIRKTVFDTEVGMKYGGQPLWHHVECFAQLRGELGWLDTGENLPGFQTLKSDDKADVKKALPVIKDEGVSSAKKAKIEKIDEEDAASIKELTEKIKKQSKRLFKFRDEIKNEMSKDDMVALLEANNMEPVKGDSEKLLDQVADLLTFGALLPCTDCKGRQLLFHKSGYLCNGDLTEWTKCTKLLKEPERKSCKIPGYLKYKFLKDVRKNPEVRAIRYIPPSTSTILKNISLKKGDELDGPKVKRERPPLYNIEIALIAPKEREGIVKDRISKLGGTVSTKITEKTTVVLSTPEEVERMSSRMKKAKTLGLHVIPEDYLEAVEQNGAGAINYISSMSLCDWGTDPATRITQEESKSSKSKSIYTKSVPKSMTLKIKDGLAVDPDSGLEDVAHVYVSRNKEKYNVVLGITDIQKNKNSFYKLQLLESDMKNRFWVFRSWGRIGTTIGGNKLDNFSNLVDAIVQFKELYLEKSGNHFENRENFVKVAGRMYPIDIDYAEDSKIDLSAEHDIKSKLPLSVQDIIKLMFDVDSMKRTMMEFDLDMEKMPLGKLSQKQIQSAYKVLTEIYELIQGGGTNAKFIDATNRFYTLIPHNFGTQSPPLLDTTEQVEQLRQMLDSLIEIECAYSLLQTEDSKADINPIDKHYEQLKTKLEPLDKNSEEYILLQKYVKNTHAETHKLYDLEVVDIFKVARQGEARRYKPFKKLHNRRLLWHGSRLTNFAGILSHGLKIAPPEAPVTGYMFGKGIYFADMVSKSANYCCTSHHNSTGLMLLSEVALGDMMECTAAKYVTKLPNDKHSCFGRGRTMPNPSESIIREDGVEIPLGKPITNDSLKSSLLYNEFIIYDIAQVNIQYMLRMNFKYK.

Residues 1–369 (MEIDLPFKVE…TSTILKNISL (369 aa)) mediate DNA binding. 2 consecutive PARP-type zinc fingers follow at residues 7 to 89 (FKVE…DNCT) and 114 to 203 (FGIE…PVIK). Cys19, Cys22, His51, Cys54, Cys126, Cys129, His161, and Cys164 together coordinate Zn(2+). Short sequence motifs (nuclear localization signal) lie at residues 211–214 (KKAK) and 232–235 (KIKK). The 139-residue stretch at 220–358 (EEDAASIKEL…EVRAIRYIPP (139 aa)) folds into the PADR1 zinc-binding domain. Residues 286-329 (GALLPCTDCKGRQLLFHKSGYLCNGDLTEWTKCTKLLKEPERKS) are zinc ribbon. Zn(2+)-binding residues include Cys291, Cys294, Cys308, and Cys318. The interval 370-507 (KKGDELDGPK…SIYTKSVPKS (138 aa)) is automodification domain. Residues 382-473 (RERPPLYNIE…AGAINYISSM (92 aa)) form the BRCT domain. The WGR domain maps to 527–625 (VAHVYVSRNK…ENFVKVAGRM (99 aa)). One can recognise a PARP alpha-helical domain in the interval 647 to 764 (KSKLPLSVQD…EIECAYSLLQ (118 aa)). Residues 773-996 (NPIDKHYEQL…YMLRMNFKYK (224 aa)) enclose the PARP catalytic domain.

This sequence belongs to the ARTD/PARP family.

It is found in the nucleus. The catalysed reaction is NAD(+) + (ADP-D-ribosyl)n-acceptor = nicotinamide + (ADP-D-ribosyl)n+1-acceptor + H(+).. It catalyses the reaction L-aspartyl-[protein] + NAD(+) = 4-O-(ADP-D-ribosyl)-L-aspartyl-[protein] + nicotinamide. It carries out the reaction L-glutamyl-[protein] + NAD(+) = 5-O-(ADP-D-ribosyl)-L-glutamyl-[protein] + nicotinamide. Poly-ADP-ribosyltransferase that mediates poly-ADP-ribosylation of proteins and plays a key role in DNA repair. Mainly mediates glutamate and aspartate ADP-ribosylation of target proteins: the ADP-D-ribosyl group of NAD(+) is transferred to the acceptor carboxyl group of glutamate and aspartate residues and further ADP-ribosyl groups are transferred to the 2'-position of the terminal adenosine moiety, building up a polymer with an average chain length of 20-30 units. In Sarcophaga peregrina (Flesh fly), this protein is Poly [ADP-ribose] polymerase.